The chain runs to 283 residues: MQIITEPRQMQAIAEKLRLNRQFIGVVMTMGALHEGHLSLIKLARQSAGTVILTIFVNPSQFGANEDLHQYPRPFEQDVALATAAEVDYLFAPEAGTIYPENHQTTLQCGALGERLEGERRPGHFNGVATIVTKLLHITKPHIAIFGEKDAQQLAVIRRMVEDLNLDVKIIAAPIIREENGLAVSSRNIYLSNTERSTAGILYQGICHAEKSIAEQKKNLSVIAAEIEQMIASTPGWRPDYVVFVDEERFEPAEIAEEGKEYRLLLAAYAGKVRLIDNGKIVA.

30–37 (MGALHEGH) contacts ATP. Catalysis depends on H37, which acts as the Proton donor. Q61 contacts (R)-pantoate. Q61 contributes to the beta-alanine binding site. Residue 147 to 150 (GEKD) coordinates ATP. Q153 is a binding site for (R)-pantoate. ATP is bound by residues I176 and 184–187 (VSSR).

Belongs to the pantothenate synthetase family. Homodimer.

It localises to the cytoplasm. It carries out the reaction (R)-pantoate + beta-alanine + ATP = (R)-pantothenate + AMP + diphosphate + H(+). It functions in the pathway cofactor biosynthesis; (R)-pantothenate biosynthesis; (R)-pantothenate from (R)-pantoate and beta-alanine: step 1/1. Functionally, catalyzes the condensation of pantoate with beta-alanine in an ATP-dependent reaction via a pantoyl-adenylate intermediate. The protein is Pantothenate synthetase of Pelodictyon phaeoclathratiforme (strain DSM 5477 / BU-1).